Here is a 150-residue protein sequence, read N- to C-terminus: Large ribosomal subunit protein bL9 (150 aa).

This sequence belongs to the bacterial ribosomal protein bL9 family.

Functionally, binds to the 23S rRNA. This Lactococcus lactis subsp. cremoris (strain MG1363) protein is Large ribosomal subunit protein bL9.